Reading from the N-terminus, the 296-residue chain is Formamidopyrimidine-DNA glycosylase (296 aa).

P2 acts as the Schiff-base intermediate with DNA in catalysis. Catalysis depends on E3, which acts as the Proton donor. The active-site Proton donor; for beta-elimination activity is the K61. DNA-binding residues include H104, R123, and K169. The FPG-type zinc finger occupies 255–289 (DAYGREGEPCRRCGAIMRRDKFMNRSSFYCPRCQP). Catalysis depends on R279, which acts as the Proton donor; for delta-elimination activity.

It belongs to the FPG family. Monomer. Zn(2+) serves as cofactor.

The enzyme catalyses Hydrolysis of DNA containing ring-opened 7-methylguanine residues, releasing 2,6-diamino-4-hydroxy-5-(N-methyl)formamidopyrimidine.. It catalyses the reaction 2'-deoxyribonucleotide-(2'-deoxyribose 5'-phosphate)-2'-deoxyribonucleotide-DNA = a 3'-end 2'-deoxyribonucleotide-(2,3-dehydro-2,3-deoxyribose 5'-phosphate)-DNA + a 5'-end 5'-phospho-2'-deoxyribonucleoside-DNA + H(+). In terms of biological role, involved in base excision repair of DNA damaged by oxidation or by mutagenic agents. Acts as a DNA glycosylase that recognizes and removes damaged bases. Has a preference for oxidized purines, such as 7,8-dihydro-8-oxoguanine (8-oxoG). Has AP (apurinic/apyrimidinic) lyase activity and introduces nicks in the DNA strand. Cleaves the DNA backbone by beta-delta elimination to generate a single-strand break at the site of the removed base with both 3'- and 5'-phosphates. This is Formamidopyrimidine-DNA glycosylase from Mycobacterium sp. (strain KMS).